The following is a 364-amino-acid chain: Dihydroorotate dehydrogenase (quinone) (364 aa).

Residues 78-82 and Thr102 each bind FMN; that span reads AGFDK. Lys82 is a substrate binding site. 127–131 serves as a coordination point for substrate; it reads NRMGF. Asn156 and Asn189 together coordinate FMN. A substrate-binding site is contributed by Asn189. Ser192 acts as the Nucleophile in catalysis. Asn194 contributes to the substrate binding site. FMN-binding residues include Lys227 and Thr255. 256 to 257 contributes to the substrate binding site; the sequence is NT. FMN contacts are provided by residues Gly285, Gly314, and 335–336; that span reads YT.

Belongs to the dihydroorotate dehydrogenase family. Type 2 subfamily. In terms of assembly, monomer. It depends on FMN as a cofactor.

It localises to the cell membrane. The catalysed reaction is (S)-dihydroorotate + a quinone = orotate + a quinol. The protein operates within pyrimidine metabolism; UMP biosynthesis via de novo pathway; orotate from (S)-dihydroorotate (quinone route): step 1/1. Catalyzes the conversion of dihydroorotate to orotate with quinone as electron acceptor. This is Dihydroorotate dehydrogenase (quinone) from Thermosynechococcus vestitus (strain NIES-2133 / IAM M-273 / BP-1).